A 308-amino-acid chain; its full sequence is Reaction center protein M chain (308 aa).

Transmembrane regions (helical) follow at residues 54–80 (GSLGVLSLFSGLMWFFTIGIWFWYQAG), 111–140 (KEGGLWLIASFFMFVAVWSWWGRTYLRAQA), and 143–168 (MGKHTAWAFLSAIWLWMVLGFIRPIL). Residues His-183 and His-203 each coordinate (7R,8Z)-bacteriochlorophyll b. Residues 198–226 (FYNPFHGLSIAFLYGSALLFAMHGATILA) form a helical membrane-spanning segment. Fe cation contacts are provided by His-220 and Glu-235. Trp-253 lines the a ubiquinone pocket. A helical membrane pass occupies residues 260–286 (NATMEGIHRWAIWMAVLVTLTGGIGIL). His-267 contacts Fe cation.

The protein belongs to the reaction center PufL/M/PsbA/D family. As to quaternary structure, reaction center is composed of four bacteriochlorophylls, two bacteriopheophytins, two ubiquinones, one iron, and three highly hydrophobic polypeptide chains (designated L, M, and H).

Its subcellular location is the cellular chromatophore membrane. Functionally, the reaction center is a membrane-bound complex that mediates the initial photochemical event in the electron transfer process of photosynthesis. The polypeptide is Reaction center protein M chain (pufM) (Cereibacter sphaeroides (strain ATCC 17023 / DSM 158 / JCM 6121 / CCUG 31486 / LMG 2827 / NBRC 12203 / NCIMB 8253 / ATH 2.4.1.) (Rhodobacter sphaeroides)).